Reading from the N-terminus, the 250-residue chain is Urease accessory protein UreD (250 aa).

This sequence belongs to the UreD family. As to quaternary structure, ureD, UreF and UreG form a complex that acts as a GTP-hydrolysis-dependent molecular chaperone, activating the urease apoprotein by helping to assemble the nickel containing metallocenter of UreC. The UreE protein probably delivers the nickel.

Its subcellular location is the cytoplasm. Required for maturation of urease via the functional incorporation of the urease nickel metallocenter. The polypeptide is Urease accessory protein UreD (Aliarcobacter butzleri (strain RM4018) (Arcobacter butzleri)).